Reading from the N-terminus, the 463-residue chain is Flotillin-like protein 2 (463 aa).

The S-palmitoyl cysteine moiety is linked to residue C35. Positions 305–354 (EYETKVQEANWELYNKQKQAEAVLYEKQKQAEAQKAEADATFYSKQKEAE) form a coiled coil.

Belongs to the band 7/mec-2 family. Flotillin subfamily. May be palmitoylated.

The protein resides in the cell membrane. It is found in the membrane. The protein localises to the caveola. Its function is as follows. May act as a scaffolding protein within caveolar membranes, functionally participating in formation of caveolae or caveolae-like vesicles. This Arabidopsis thaliana (Mouse-ear cress) protein is Flotillin-like protein 2 (FLOT2).